The following is a 785-amino-acid chain: Probable splicing factor 3A subunit 1 (785 aa).

Position 1 is an N-acetylmethionine (M1). The segment at M1–N42 is disordered. An SURP motif 1 repeat occupies I71–Y113. The tract at residues N124 to P175 is disordered. The SURP motif 2 repeat unit spans residues I193 to F235. Disordered stretches follow at residues N522–I554 and R639–N713. 2 stretches are compositionally biased toward pro residues: residues A543–I554 and Q653–P674. The span at P677 to E686 shows a compositional bias: basic and acidic residues. Positions V707 to G782 constitute a Ubiquitin-like domain.

Component of splicing factor SF3A which is composed of three subunits.

Its subcellular location is the nucleus. The sequence is that of Probable splicing factor 3A subunit 1 from Arabidopsis thaliana (Mouse-ear cress).